Reading from the N-terminus, the 859-residue chain is MQEQYNPSEIEALVQKHWHDNKTFEVTEDANKEKFYCLSMFPYPSGRLHMGHVRNYTIGDVVARFQRLQGKNVLQPIGWDSFGLPAENAAINNKTAPAPWTYQNIEYMKNQLKLLGFGYDWSREIATCTPEYYRWEQWFFTKLYEKGLVYKKTASVNWCPNDETVLANEQVQDGCCWRCDTPVEQKEIPQWFIKITAYAEELLNDIDTLDGWPEQVKTMQRNWIGRSEGVEMTFGVAGSDKSFDIYTTRPDTLMGVTYVAIAAGHPLAELAAQTNPELAQFIEECKNSTTSEADLATMEKRGVATGLYAIHPITGKQVPIWAANFVLMNYGTGAVMSVPGHDQRDYEFAKKYNLSIEAVIKPVDGELDISEAAYTEKGVLFNSGEFDGLDFDGAFNAIADKLVAEGKGKRQVNYRLRDWGVSRQRYWGAPIPMVTLADGTVIPTPEDQLPVILPEDVVMDGIQSPIKADKEWAKTQVNGQDALRETDTFDTFMESSWYYARYCSPQADQMLDPTKANYWLPVDQYIGGIEHACMHLLYFRFFHKLLRDAGLVNSNEPAKQLLTQGMVLADAFYYNNDKGARVWVSPLDVVTTEKDDKGRVTKAIDKDGNELVYTGMCKMSKSKNNGIDPQVMVEKYGADTVRLFMMFASPPELTLEWQESGVEGAHRFIKRLWKLASDYVAQDNSEALDVSKLTSEQKALRREVHKTIAKVTDDIGRRQMFNTAVAAVMELMNHLQKAPQTTGQDRAIIGEALTAVVRLLYPIIPHVSFTLWNELGNTNSIEDSQWPVVDESALVEDSKLIVVQVNGKVRAKITVAADADQASVEALGMADEQVIKYLDGVTVRKVIYVPGKLLSIVAN.

Residues 42–52 (PYPSGRLHMGH) carry the 'HIGH' region motif. The short motif at 618–622 (KMSKS) is the 'KMSKS' region element. ATP is bound at residue Lys-621.

The protein belongs to the class-I aminoacyl-tRNA synthetase family.

The protein localises to the cytoplasm. It carries out the reaction tRNA(Leu) + L-leucine + ATP = L-leucyl-tRNA(Leu) + AMP + diphosphate. The sequence is that of Leucine--tRNA ligase from Shewanella sp. (strain MR-4).